An 813-amino-acid chain; its full sequence is MKISLKWLHDYVDVTEFFQKPEVLAEALTRGGLEVEEITNRAKDFNHVVIGHILEKDKHPNADKLSLCRVSTGEGVVHQIVCGAQNHKAGDRVIVALPGAVLPGNFAIKKSAVRGVDSAGMLCSLKELGLATESEGIAILPADAPVGKAYAEYGGYDDVTFELKVTANRADCLSHFGLAREVSTLFGKELKVPSSELKTNGKSSKSEIALDVKAFDLCPRYAGRFLKGVKVGPSPAWLKARLESVGMNSINNIVDVTNYVMLELGQPLHAFDAAFINGKKIIVDRAVAGEKFITLDGTEIALNGAELTIRDVNHPVCLAGVVGGKNSGVSDSTTEVFLEAAYFLPMSARKTSRSHGIDTDSSYRFARGVDPDGTLRGLNRAAALILEVAGGEAYADHHDFYPNPVKKAPVDITIKTVSDRLGYEAEEHKFVDFMKRLGCEINKKGETFTVLPPTFRFDIEQDMDLVEEYARLNGYEHIPEALPALAAAPSFQDKTFMLNRTTSELLRGEGFQQAVNFAFVGSKAQKAFLGSLEALKATGLAATEKEIRILNPLNEEMDVMRSSLSFGLFKNLNHNFHSGNMQGRLFEIGSTFFVKDDGSFAEGSRAGMAIWGRASNLWNKSLDYPVVYELKAAVEVLLKSLNISSYTWVTPANKSEVPEFLHQGQFAQLLVEGKKVGFIGTLHPLLLEDNKIRVPAALAELDLDQLYKGQPRPYRIQSVSKFPIVERDFAFVMPKALKVGDVLKDIRKAGAGLLLNVDVFDLYEGEKMEAGKKSVAIRIWLQDKNATLQETQINETTTKILESLKKNFDLSVR.

A tRNA-binding domain is found at 42-151 (AKDFNHVVIG…ADAPVGKAYA (110 aa)). One can recognise a B5 domain in the interval 405–480 (VKKAPVDITI…RLNGYEHIPE (76 aa)). 4 residues coordinate Mg(2+): D458, D464, E467, and E468. In terms of domain architecture, FDX-ACB spans 720–813 (SKFPIVERDF…LKKNFDLSVR (94 aa)).

Belongs to the phenylalanyl-tRNA synthetase beta subunit family. Type 1 subfamily. As to quaternary structure, tetramer of two alpha and two beta subunits. It depends on Mg(2+) as a cofactor.

It localises to the cytoplasm. It catalyses the reaction tRNA(Phe) + L-phenylalanine + ATP = L-phenylalanyl-tRNA(Phe) + AMP + diphosphate + H(+). The polypeptide is Phenylalanine--tRNA ligase beta subunit (Bdellovibrio bacteriovorus (strain ATCC 15356 / DSM 50701 / NCIMB 9529 / HD100)).